The sequence spans 226 residues: Lysoplasmalogenase TMEM86B (226 aa).

Residues 1 to 23 are Cytoplasmic-facing; sequence MDPGKEGLPRKPRFSAQQLHVGK. The chain crosses the membrane as a helical span at residues 24–40; the sequence is WLSPFFFTCAVYFLLWI. The Extracellular segment spans residues 41–46; sequence PDDQPS. Residues 47–64 form a helical membrane-spanning segment; that stretch reads WVGALVKCLPVLSLVVFL. The Cytoplasmic portion of the chain corresponds to 65–76; the sequence is RAVDAGGGYSAR. The chain crosses the membrane as a helical span at residues 77–93; that stretch reads LQGALLCSAVGDACLVW. Residues 94–99 lie on the Extracellular side of the membrane; the sequence is PEAFLH. A helical membrane pass occupies residues 100-117; sequence GVAAFAAAHLLYLWAFGL. Topologically, residues 118-123 are cytoplasmic; that stretch reads TPLQPG. Residues 124-140 traverse the membrane as a helical segment; it reads LLLLVILAALPYYGLLL. Topologically, residues 141–146 are extracellular; it reads WHLPPD. The helical transmembrane segment at 147-163 threads the bilayer; it reads LVLALTAYSLALATMLW. The Cytoplasmic portion of the chain corresponds to 164–171; it reads RGLARGGS. The helical transmembrane segment at 172–188 threads the bilayer; that stretch reads TGWGALLFTLSDTTLAW. Residues 189 to 199 lie on the Extracellular side of the membrane; the sequence is NAFAQPLPHAR. The chain crosses the membrane as a helical span at residues 200–217; the sequence is LVVMTTYYSAQVLISLSV. Topologically, residues 218–226 are cytoplasmic; that stretch reads SQSPKLKPN.

Belongs to the TMEM86 family. In terms of assembly, homodimer.

It is found in the endoplasmic reticulum membrane. The protein resides in the cytoplasm. The enzyme catalyses a 1-O-(1Z-alkenyl)-sn-glycero-3-phosphocholine + H2O = a 2,3-saturated aldehyde + sn-glycerol 3-phosphocholine. The catalysed reaction is a 1-O-(1Z-alkenyl)-sn-glycero-3-phosphoethanolamine + H2O = a 2,3-saturated aldehyde + sn-glycero-3-phosphoethanolamine. With respect to regulation, competitively inhibited by lysophosphatidic acid. Its function is as follows. Catalyzes the hydrolysis of the vinyl ether bond of choline or ethanolamine lysoplasmalogens, forming fatty aldehyde and glycerophosphocholine or glycerophosphoethanolamine, respectively and is specific for the sn-2-deacylated (lyso) form of plasmalogen. The chain is Lysoplasmalogenase TMEM86B (TMEM86B) from Sus scrofa (Pig).